The primary structure comprises 496 residues: MLVVLLVALLVTRLVASLFRLALKELRHPLQGVVPSVSRVPLLGAAWQMRSFQPDNLHDKFAEYVKRFGRSFMGTVLGHVVMVTAEPRHIDALLQGQHQLKKGTMYFALRGWLGDGLLLSRGKEWHTMRKIITPTFHFSILEQFVEVFDRQSSILVERLRTLSYGNEVVNIYPLVGLAALDIITETAMGVNVDAQGADSEVVHAVKDLTNILATRFMRPHLLFPHLFRLCWPSGFRKQQAGVICLHEFTNGIIEQRRRLLAREANQDKPTKPHALLDTLLRATVDGQPLTDKQIRDEVNTFIFEGHDTTTSAVSFCLYLLSRHEAVQQKLFEELRMHYGQDLFRGVILSDFATLPYLSCVVKESLRLYPPIPAVARCLEKDLVIDEGYIPVGTNVVVLLWQLLRDEAIFTDPLVFQPERHLGEEAPRLSPYSYIPFSAGPRNCIGQKFALLEMKTMVTKVIRHYQLLPMGADVEPSIKIVLRSKSGVNVGLRPRLY.

Cys443 serves as a coordination point for heme.

It belongs to the cytochrome P450 family. Heme serves as cofactor.

The protein resides in the endoplasmic reticulum membrane. It is found in the microsome membrane. Its function is as follows. May be involved in the metabolism of insect hormones and in the breakdown of synthetic insecticides. The sequence is that of Cytochrome P450 4ae1 (Cyp4ae1) from Drosophila melanogaster (Fruit fly).